The chain runs to 478 residues: Vitronectin (478 aa).

An N-terminal signal peptide occupies residues 1–19; the sequence is MAPLRPFFILALVAWVSLA. One can recognise an SMB domain in the interval 20–63; the sequence is DQESCKGRCTQGFMASKKCQCDELCTYYQSCCADYMEQCKPQVT. 7 cysteine pairs are disulfide-bonded: Cys24/Cys28, Cys24/Cys40, Cys28/Cys58, Cys38/Cys40, Cys38/Cys51, Cys44/Cys50, and Cys51/Cys58. The short motif at 64 to 66 is the Cell attachment site element; sequence RGD. Thr69 is subject to Phosphothreonine. Residues Tyr75, Tyr78, and Tyr80 each carry the sulfotyrosine modification. The segment at 82-153 is disordered; sequence EEPKNNTNTG…QGTPEFPEEE (72 aa). Asn86 carries N-linked (GlcNAc...) asparagine glycosylation. Polar residues predominate over residues 86 to 99; sequence NNTNTGVQPENTSP. Positions 131 to 141 are enriched in basic and acidic residues; the sequence is EQQEEILRPDT. Hemopexin repeat units follow at residues 157–201, 202–249, and 250–304; these read GKPF…VWGI, EGPI…FSGI, and PDNV…FEHF. Asn168 and Asn241 each carry an N-linked (GlcNAc...) asparagine glycan. 2 positions are modified to sulfotyrosine: Tyr278 and Tyr281. Cysteines 292 and 431 form a disulfide. Phosphoserine is present on residues Ser311 and Ser362. A disordered region spans residues 359–395; sequence LSHSAQAKKQKSKRRSRKRYRSRRGRGHRRSQSSNSR. Basic residues predominate over residues 364–389; it reads QAKKQKSKRRSRKRYRSRRGRGHRRS. Residues 366 to 399 form a heparin-binding region; the sequence is KKQKSKRRSRKRYRSRRGRGHRRSQSSNSRRSSR. Ser398 carries the post-translational modification Phosphoserine; by PKA. Residues Tyr416, Tyr419, and Tyr421 each carry the sulfotyrosine modification. The Hemopexin 4 repeat unit spans residues 420–473; that stretch reads DYDMDWLVPATCEPIQSVYFFSGDKYYRVNLRTRRVDSVNPPYPRSIAQYWLGC.

Interacts with SERPINE1/PAI1, insulin and C1QBP. In terms of processing, sulfated on tyrosine residues. N- and O-glycosylated. Post-translationally, it has been suggested that the active SMB domain may be permitted considerable disulfide bond heterogeneity or variability, thus two alternate disulfide patterns based on 3D structures are described with 1 disulfide bond conserved in both. As to expression, plasma.

Its subcellular location is the secreted. The protein resides in the extracellular space. In terms of biological role, vitronectin is a cell adhesion and spreading factor found in serum and tissues. Vitronectin interact with glycosaminoglycans and proteoglycans. Is recognized by certain members of the integrin family and serves as a cell-to-substrate adhesion molecule. Inhibitor of the membrane-damaging effect of the terminal cytolytic complement pathway. The sequence is that of Vitronectin (Vtn) from Mus musculus (Mouse).